The sequence spans 164 residues: Phosphopantetheine adenylyltransferase (164 aa).

Residue threonine 10 participates in substrate binding. Residues 10 to 11 (TF) and histidine 18 contribute to the ATP site. 3 residues coordinate substrate: lysine 44, leucine 76, and arginine 90. Residues 91 to 93 (GLR), glutamate 101, and 126 to 132 (YAFISSS) contribute to the ATP site.

The protein belongs to the bacterial CoaD family. In terms of assembly, homohexamer. Mg(2+) is required as a cofactor.

The protein resides in the cytoplasm. It carries out the reaction (R)-4'-phosphopantetheine + ATP + H(+) = 3'-dephospho-CoA + diphosphate. It functions in the pathway cofactor biosynthesis; coenzyme A biosynthesis; CoA from (R)-pantothenate: step 4/5. In terms of biological role, reversibly transfers an adenylyl group from ATP to 4'-phosphopantetheine, yielding dephospho-CoA (dPCoA) and pyrophosphate. The sequence is that of Phosphopantetheine adenylyltransferase from Halorhodospira halophila (strain DSM 244 / SL1) (Ectothiorhodospira halophila (strain DSM 244 / SL1)).